Here is a 270-residue protein sequence, read N- to C-terminus: UPF0354 protein BC_4690 (270 aa).

It belongs to the UPF0354 family.

The sequence is that of UPF0354 protein BC_4690 from Bacillus cereus (strain ATCC 14579 / DSM 31 / CCUG 7414 / JCM 2152 / NBRC 15305 / NCIMB 9373 / NCTC 2599 / NRRL B-3711).